The following is a 563-amino-acid chain: Arginine--tRNA ligase (563 aa).

The 'HIGH' region motif lies at 122–132 (PNIAKPISMGH).

It belongs to the class-I aminoacyl-tRNA synthetase family. Monomer.

The protein localises to the cytoplasm. The enzyme catalyses tRNA(Arg) + L-arginine + ATP = L-arginyl-tRNA(Arg) + AMP + diphosphate. This chain is Arginine--tRNA ligase, found in Enterococcus faecalis (strain ATCC 700802 / V583).